The primary structure comprises 243 residues: Small ribosomal subunit protein uS3 (243 aa).

A KH type-2 domain is found at 39 to 110 (IRKFIHKKYG…QVRINVVEVE (72 aa)). Residues 217-243 (QQLPVGATPRRRAGRRPQQFEDRSNEG) form a disordered region. Positions 234–243 (QQFEDRSNEG) are enriched in basic and acidic residues.

This sequence belongs to the universal ribosomal protein uS3 family. Part of the 30S ribosomal subunit. Forms a tight complex with proteins S10 and S14.

Its function is as follows. Binds the lower part of the 30S subunit head. Binds mRNA in the 70S ribosome, positioning it for translation. This is Small ribosomal subunit protein uS3 from Synechococcus sp. (strain WH7803).